Here is a 428-residue protein sequence, read N- to C-terminus: Trigger factor (428 aa).

One can recognise a PPIase FKBP-type domain in the interval 163 to 248 (GDTAVIDFEG…INEVKAKELP (86 aa)).

It belongs to the FKBP-type PPIase family. Tig subfamily.

Its subcellular location is the cytoplasm. The enzyme catalyses [protein]-peptidylproline (omega=180) = [protein]-peptidylproline (omega=0). Its function is as follows. Involved in protein export. Acts as a chaperone by maintaining the newly synthesized protein in an open conformation. Functions as a peptidyl-prolyl cis-trans isomerase. This chain is Trigger factor, found in Oceanobacillus iheyensis (strain DSM 14371 / CIP 107618 / JCM 11309 / KCTC 3954 / HTE831).